Reading from the N-terminus, the 366-residue chain is tRNA(Met) cytidine acetate ligase (366 aa).

Residues Ile7 to Leu20, Gly101, Asn145, and Arg170 each bind ATP.

Belongs to the TmcAL family.

The protein resides in the cytoplasm. The catalysed reaction is cytidine(34) in elongator tRNA(Met) + acetate + ATP = N(4)-acetylcytidine(34) in elongator tRNA(Met) + AMP + diphosphate. Catalyzes the formation of N(4)-acetylcytidine (ac(4)C) at the wobble position of elongator tRNA(Met), using acetate and ATP as substrates. First activates an acetate ion to form acetyladenylate (Ac-AMP) and then transfers the acetyl group to tRNA to form ac(4)C34. This is tRNA(Met) cytidine acetate ligase from Pediococcus pentosaceus (strain ATCC 25745 / CCUG 21536 / LMG 10740 / 183-1w).